The following is an 805-amino-acid chain: Sucrose synthase (805 aa).

Positions 275 to 752 (MVFNVVILSP…GLKRIEEKYT (478 aa)) are GT-B glycosyltransferase.

This sequence belongs to the glycosyltransferase 1 family. Plant sucrose synthase subfamily. In terms of tissue distribution, expression is at least 10-fold higher in tubers compared to photosynthetically active tissues.

The catalysed reaction is an NDP-alpha-D-glucose + D-fructose = a ribonucleoside 5'-diphosphate + sucrose + H(+). Functionally, sucrose-cleaving enzyme that provides UDP-glucose and fructose for various metabolic pathways. This chain is Sucrose synthase, found in Solanum tuberosum (Potato).